A 490-amino-acid chain; its full sequence is Cytochrome P450 90D2 (490 aa).

Residues 4 to 24 (AAAGWAAPAFAVAAVVIWVVL) traverse the membrane as a helical segment. Cys437 is a binding site for heme.

The protein belongs to the cytochrome P450 family. It depends on heme as a cofactor.

The protein localises to the membrane. It carries out the reaction 6-deoxoteasterone + reduced [NADPH--hemoprotein reductase] + O2 = 3-dehydro-6-deoxoteasterone + oxidized [NADPH--hemoprotein reductase] + 2 H2O + H(+). The protein operates within plant hormone biosynthesis; brassinosteroid biosynthesis. In terms of biological role, catalyzes the C6-oxidation step in brassinosteroids biosynthesis. May convert 6-deoxoteasterone (6-deoxoTE) to 3-dehydro-6-deoxoteasterone (6-deoxo3DT, 6-deoxo3DHT), and teasterone (TE) to 3-dehydroteasterone (3DT, 3-DHT). Involved in the elongation of leaf sheaths and stems. This is Cytochrome P450 90D2 from Oryza sativa subsp. indica (Rice).